A 381-amino-acid polypeptide reads, in one-letter code: Ceropsin (381 aa).

Over 1 to 62 (MSISMDAGPG…MNPLWHALLG (62 aa)) the chain is Extracellular. An N-linked (GlcNAc...) asparagine glycan is attached at Asn-28. A helical transmembrane segment spans residues 63 to 83 (FTIGVLGFISMMGNGMVIYIF). Over 84–96 (MTTKNLKTPSNLL) the chain is Cytoplasmic. The chain crosses the membrane as a helical span at residues 97–117 (VVNLAFSDFLMMCAMSPAMVI). Topologically, residues 118–133 (NCYNETWVFGPFACEL) are extracellular. N-linked (GlcNAc...) asparagine glycosylation occurs at Asn-121. Residues Cys-131 and Cys-208 are joined by a disulfide bond. A helical membrane pass occupies residues 134 to 154 (YGCAGSLFGCASIWTMTMIAF). Over 155-173 (DRYNVIVKGIAAKPMTNNG) the chain is Cytoplasmic. A helical transmembrane segment spans residues 174 to 194 (ALLRILGIWAFSLAWTVAPFF). The Extracellular portion of the chain corresponds to 195–221 (GWNRYVPEGNMTACGTDYLTKDWFSRS). The N-linked (GlcNAc...) asparagine glycan is linked to Asn-204. Residues 222 to 242 (YIVVYSVFVYFAPLLLIVYSY) traverse the membrane as a helical segment. The Cytoplasmic segment spans residues 243–284 (YYIVQAVSAHEKAMREQAKKMNVASLRSSEAANTSTECKLAK). A helical membrane pass occupies residues 285–305 (VALMTISLWFMAWTPYLVINY). At 306–316 (TGILESAPISP) the chain is on the extracellular side. The chain crosses the membrane as a helical span at residues 317-339 (LATIWGSLFAKANAVYNPIVYGI). The Cytoplasmic segment spans residues 340–381 (SHPKYQAALYKRFPVLQCHSTTTDEASSVASGTTVMEEKPTA).

The protein belongs to the G-protein coupled receptor 1 family. Opsin subfamily. As to expression, expressed bilaterally in dorsal and ventral anterior protocerebral cells and bilaterally in the dorsal posterior protocerebral and lateral posterior tritocerebral cells (at protein level). Expressed in the larval brain but not in the subesophageal ganglion or thoracic ganglion.

Its subcellular location is the membrane. In terms of biological role, visual pigments are the light-absorbing molecules that mediate vision. They consist of an apoprotein, opsin, covalently linked to cis-retinal. May play a role in photoperiodic photoreception. This is Ceropsin from Bombyx mori (Silk moth).